We begin with the raw amino-acid sequence, 496 residues long: MQISLYQKNLADWTGSIIAVGLLEGQIQEQLSLLEEICDYDSLLTHVEEKDFSAKAGELIKLEILGKSLEKIILIGLGKPEALSIDDLREGAALASRASIGSKGKIGILFPWEPFNPISASKAVAEAMRLSIFKDLRFQSEPKPQNNPQSIDLIGLPESNHNIIKEVDPICSGVELARELVAAPPNELTPAALAEKAVEIAKKFKWNYKILNRKECEKEGMGAYLAVSQGSDLEPQFIHLTYKPNGQIKRRIAMVGKGLTFDSGGYNLKVGASQIEMMKYDMGGSAAVIGAARAIGELAPVDTEVHFIVAACENMVNGSAVHPGDIIKASNGTTIEINNTDAEGRLTLADALIYACKLEPDAIVDLATLTGACVIALGEEIAGLWVESDELANELKDASSACGEKLWRMPLQASYKEGLKSMLADIKNTGPRSGGSITAALFLKEFISNGIKWAHIDIAGTCWTDKDRGIDPAGATGFGVRTLVNWACKSNPDIEK.

Mn(2+) is bound by residues lysine 257 and aspartate 262. Lysine 269 is an active-site residue. The Mn(2+) site is built by aspartate 281, aspartate 341, and glutamate 343. Arginine 345 is an active-site residue.

It belongs to the peptidase M17 family. It depends on Mn(2+) as a cofactor.

It is found in the cytoplasm. It catalyses the reaction Release of an N-terminal amino acid, Xaa-|-Yaa-, in which Xaa is preferably Leu, but may be other amino acids including Pro although not Arg or Lys, and Yaa may be Pro. Amino acid amides and methyl esters are also readily hydrolyzed, but rates on arylamides are exceedingly low.. The catalysed reaction is Release of an N-terminal amino acid, preferentially leucine, but not glutamic or aspartic acids.. Presumably involved in the processing and regular turnover of intracellular proteins. Catalyzes the removal of unsubstituted N-terminal amino acids from various peptides. In Prochlorococcus marinus (strain SARG / CCMP1375 / SS120), this protein is Probable cytosol aminopeptidase.